The following is a 255-amino-acid chain: Tachylectin-2 (255 aa).

Positions 1–19 are cleaved as a signal peptide; sequence MKFLLVVLGFIGFLKDGIT. 5 WD repeats span residues 20-67, 68-114, 115-161, 162-208, and 209-255; these read VGGE…FLFL, SPGG…FLFF, DPNG…FLFF, HPNG…FLFF, and SSVG…FLFF.

In terms of assembly, monomer.

It localises to the secreted. It is found in the cytoplasmic granule. Its function is as follows. Lectin that binds specifically to N-acetylglucosamine and N-acetylgalactosamine. Is part of the innate immunity host defense system of the horseshoe crab. The polypeptide is Tachylectin-2 (Tachypleus tridentatus (Japanese horseshoe crab)).